Consider the following 152-residue polypeptide: SMN complex subunit smn1 (152 aa).

The segment at 26-51 is interacts with yip11/gem2; that stretch reads KKYHSIEAKGGVSDPDSRLDGEKLIS. The segment at 88-110 is disordered; the sequence is DNKGLSDEKPETRAAETHQEFME. Basic and acidic residues predominate over residues 91 to 108; sequence GLSDEKPETRAAETHQEF. The tract at residues 130–152 is may interact with gem8; it reads SWYYAGYYTGLAEGLAKSEQRKD.

It belongs to the SMN family. Homooligomer; may form homodimers and homotetramers. Part of the core SMN complex at least composed of smn1, yip11/gem2, gem6, gem7 and gem8. Part of the SMN-Sm complex. Interacts with yip11/gem2; the interaction is direct. Interacts with gem8; the interaction is direct. Interacts with proteins of the Sm complex, including smn1, smb1, smd1, smd2 and smd3.

It localises to the nucleus. The SMN complex catalyzes the assembly of small nuclear ribonucleoproteins (snRNPs), the building blocks of the spliceosome, and thereby plays an important role in the splicing of cellular pre-mRNAs. Most spliceosomal snRNPs contain a common set of Sm proteins smb1, smd1, smd2, smd3, sme1, smf1 and smg1 that assemble in a heptameric protein ring on the Sm site of the small nuclear RNA to form the core snRNP (Sm core). In the cytosol, the Sm proteins smd1, smd2, sme1, smf1 and smg1 (5Sm) are trapped in an inactive 6S pICln-Sm complex by the chaperone saf5 that controls the assembly of the core snRNP. To assemble core snRNPs, the SMN complex accepts the trapped 5Sm proteins from saf5 forming an intermediate. Binding of snRNA inside 5Sm triggers eviction of the SMN complex, thereby allowing binding of smd3 and smb1 to complete assembly of the core snRNP. Within the SMN complex, smn1 acts as a structural backbone and together with yip11/gem2 it gathers the Sm complex subunits. The protein is SMN complex subunit smn1 of Schizosaccharomyces pombe (strain 972 / ATCC 24843) (Fission yeast).